The chain runs to 141 residues: Putative 8-oxo-dGTP diphosphatase 2 (141 aa).

The region spanning 2 to 131 is the Nudix hydrolase domain; the sequence is LNQIVVAGAI…WIADLARTLN (130 aa). Mg(2+) contacts are provided by Gly37, Glu52, Glu55, and Glu56. Residues 37-58 carry the Nudix box motif; that stretch reads GKVAAGETERAALARELAEELG.

Belongs to the Nudix hydrolase family. It depends on Mg(2+) as a cofactor. Mn(2+) is required as a cofactor.

The catalysed reaction is 8-oxo-dGTP + H2O = 8-oxo-dGMP + diphosphate + H(+). In terms of biological role, may be involved in the GO system responsible for removing an oxidatively damaged form of guanine (7,8-dihydro-8-oxoguanine, 8-oxo-dGTP) from DNA and the nucleotide pool. 8-oxo-dGTP is inserted opposite dA and dC residues of template DNA with almost equal efficiency thus leading to A.T to G.C transversions. MutT specifically degrades 8-oxo-dGTP to the monophosphate. This chain is Putative 8-oxo-dGTP diphosphatase 2 (mutT2), found in Mycobacterium tuberculosis (strain CDC 1551 / Oshkosh).